The primary structure comprises 142 residues: Transcriptional regulator MraZ (142 aa).

SpoVT-AbrB domains are found at residues 5–47 (EYPY…PLAS) and 76–119 (ANKA…NPGR).

It belongs to the MraZ family. In terms of assembly, forms oligomers.

The protein resides in the cytoplasm. Its subcellular location is the nucleoid. In Deinococcus deserti (strain DSM 17065 / CIP 109153 / LMG 22923 / VCD115), this protein is Transcriptional regulator MraZ.